Here is a 412-residue protein sequence, read N- to C-terminus: MDSWAGHEVPRLPGRGGPLMLFDSARQGVAASTPTGTGTMYVCGITPYDATHLGHAATMITFDLVQRVWRDAGLDVTYVQNVTDIDDPLLERAARDGEDWKVLAMRETALFREDMVALRIIPPAHYVGAVESIPDIAERVLTLVKEEAAYRIDDGTGDVYFDISAAPRFGYESNLGREQMLKIFPERGGDPDRAGKRDPLDPLLWRSARADEPSWPGGGLGPGRPGWHIECAVIALNLLGHRIDVQGGGNDLIFPHHECSAAHAELLTGQSPFAQHYVHAGMIGLAGEKMSKSRGNLVFVSRLRADRVDPMAVRLALMSGHYRSDRSWNDDLLVTAQKRLDRWRRAAAAPSGPSARTFLAAFRERLADDLDSPGALTLADSWADAALVGTGDDQAAPALFARAVDALLGVRL.

Cys43 contributes to the Zn(2+) binding site. L-cysteinyl-5'-AMP is bound by residues 43 to 46 (CGIT), Thr58, and 81 to 83 (NVT). Residues 45-55 (ITPYDATHLGH) carry the 'HIGH' region motif. A 'ERGGDP' region motif is present at residues 186-191 (ERGGDP). Trp227 contacts L-cysteinyl-5'-AMP. Cys231 provides a ligand contact to Zn(2+). Residue 249 to 251 (GND) participates in L-cysteinyl-5'-AMP binding. His256 lines the Zn(2+) pocket. Ile283 is an L-cysteinyl-5'-AMP binding site. The 'KMSKS' region motif lies at 289–293 (KMSKS).

This sequence belongs to the class-I aminoacyl-tRNA synthetase family. MshC subfamily. In terms of assembly, monomer. Zn(2+) is required as a cofactor.

It catalyses the reaction 1D-myo-inositol 2-amino-2-deoxy-alpha-D-glucopyranoside + L-cysteine + ATP = 1D-myo-inositol 2-(L-cysteinylamino)-2-deoxy-alpha-D-glucopyranoside + AMP + diphosphate + H(+). Its function is as follows. Catalyzes the ATP-dependent condensation of GlcN-Ins and L-cysteine to form L-Cys-GlcN-Ins. In Salinispora arenicola (strain CNS-205), this protein is L-cysteine:1D-myo-inositol 2-amino-2-deoxy-alpha-D-glucopyranoside ligase.